A 172-amino-acid chain; its full sequence is Translation initiation factor IF-3 (172 aa).

It belongs to the IF-3 family. Monomer.

It localises to the cytoplasm. Its function is as follows. IF-3 binds to the 30S ribosomal subunit and shifts the equilibrium between 70S ribosomes and their 50S and 30S subunits in favor of the free subunits, thus enhancing the availability of 30S subunits on which protein synthesis initiation begins. This chain is Translation initiation factor IF-3, found in Campylobacter fetus subsp. fetus (strain 82-40).